Here is a 566-residue protein sequence, read N- to C-terminus: Membrane protein insertase YidC (566 aa).

5 consecutive transmembrane segments (helical) span residues 3–23 (IKRI…FNAW), 346–366 (GWLW…HAVV), 369–389 (WGWS…WFSA), 436–456 (GGCL…YVII), and 509–529 (MWIL…GLVL).

The protein belongs to the OXA1/ALB3/YidC family. Type 1 subfamily. In terms of assembly, interacts with the Sec translocase complex via SecD. Specifically interacts with transmembrane segments of nascent integral membrane proteins during membrane integration.

The protein resides in the cell inner membrane. Functionally, required for the insertion and/or proper folding and/or complex formation of integral membrane proteins into the membrane. Involved in integration of membrane proteins that insert both dependently and independently of the Sec translocase complex, as well as at least some lipoproteins. Aids folding of multispanning membrane proteins. The chain is Membrane protein insertase YidC from Coxiella burnetii (strain CbuK_Q154) (Coxiella burnetii (strain Q154)).